The following is an 876-amino-acid chain: Probable DNA-directed RNA polymerase catalytic subunit (876 aa).

This sequence belongs to the RNA polymerase beta chain family. Interacts with LEF-4, LEF-9, and p47.

It carries out the reaction RNA(n) + a ribonucleoside 5'-triphosphate = RNA(n+1) + diphosphate. Component of the viral DNA-dependent RNA polymerase which is composed of four equimolar subunits of LEF-4, LEF-8, LEF-9, and p47. Plays an essential role in late and very late gene expression. This chain is Probable DNA-directed RNA polymerase catalytic subunit (LEF-8), found in Autographa californica nuclear polyhedrosis virus (AcMNPV).